The primary structure comprises 272 residues: 1,4-dihydroxy-2-naphthoyl-CoA synthase (272 aa).

Substrate is bound by residues Arg33, 72–76 (SGGDQ), Tyr84, 116–120 (YAIGG), Thr142, Ser148, Tyr245, and Lys260. 141–143 (QTG) serves as a coordination point for hydrogencarbonate. Over residues 253 to 264 (GRDAFKEKRDPD) the composition is skewed to basic and acidic residues. Residues 253–272 (GRDAFKEKRDPDFDQFPKFP) are disordered.

Belongs to the enoyl-CoA hydratase/isomerase family. MenB subfamily. Requires hydrogencarbonate as cofactor.

It catalyses the reaction 2-succinylbenzoyl-CoA + H(+) = 1,4-dihydroxy-2-naphthoyl-CoA + H2O. The protein operates within quinol/quinone metabolism; 1,4-dihydroxy-2-naphthoate biosynthesis; 1,4-dihydroxy-2-naphthoate from chorismate: step 6/7. It functions in the pathway quinol/quinone metabolism; menaquinone biosynthesis. In terms of biological role, converts o-succinylbenzoyl-CoA (OSB-CoA) to 1,4-dihydroxy-2-naphthoyl-CoA (DHNA-CoA). This Staphylococcus saprophyticus subsp. saprophyticus (strain ATCC 15305 / DSM 20229 / NCIMB 8711 / NCTC 7292 / S-41) protein is 1,4-dihydroxy-2-naphthoyl-CoA synthase.